The sequence spans 305 residues: Guanine nucleotide-binding protein subunit beta (305 aa).

WD repeat units follow at residues 19–49, 61–91, 104–133, 145–176, 188–218, 231–260, and 272–302; these read NKLG…LVWD, APSV…VVYD, GHAG…MFWD, GHEM…KLWD, GNTS…RCFD, PSSS…EVWD, and GHEN…RLWS.

Belongs to the WD repeat G protein beta family. As to quaternary structure, g proteins are composed of 3 units, alpha, beta and gamma. Binding of the beta-gamma subunit complex (git5-git11) to the alpha subunit (gpa2) facilitates interaction with GPCR git3.

The protein resides in the cell membrane. It is found in the cytoplasm. Its subcellular location is the nucleus. Beta subunit of the heterotrimeric guanine nucleotide-binding protein (G protein) involved in glucose-induced cAMP signaling. The beta-gamma subunits (git5-git11) promote binding of the alpha subunit gpa2 to GPCR git3, which senses extracellular glucose, to activate cAMP-PKA signaling and repress sexual development and gluconeogenesis. The sequence is that of Guanine nucleotide-binding protein subunit beta (git5) from Schizosaccharomyces pombe (strain 972 / ATCC 24843) (Fission yeast).